A 187-amino-acid polypeptide reads, in one-letter code: Ribosome-recycling factor (187 aa).

Belongs to the RRF family.

It localises to the cytoplasm. Functionally, responsible for the release of ribosomes from messenger RNA at the termination of protein biosynthesis. May increase the efficiency of translation by recycling ribosomes from one round of translation to another. In Parabacteroides distasonis (strain ATCC 8503 / DSM 20701 / CIP 104284 / JCM 5825 / NCTC 11152), this protein is Ribosome-recycling factor.